Consider the following 710-residue polypeptide: Methionine--tRNA ligase (710 aa).

Residues 26–36 carry the 'HIGH' region motif; sequence PYANGQIHIGH. Zn(2+) contacts are provided by C157, C160, C170, and C173. Residues 347–351 carry the 'KMSKS' region motif; the sequence is KMSKS. K350 contributes to the ATP binding site. Positions 604–710 constitute a tRNA-binding domain; sequence DFAKIDLRIA…SGAKPGMRVK (107 aa).

It belongs to the class-I aminoacyl-tRNA synthetase family. MetG type 1 subfamily. In terms of assembly, homodimer. Zn(2+) is required as a cofactor.

The protein resides in the cytoplasm. The enzyme catalyses tRNA(Met) + L-methionine + ATP = L-methionyl-tRNA(Met) + AMP + diphosphate. In terms of biological role, is required not only for elongation of protein synthesis but also for the initiation of all mRNA translation through initiator tRNA(fMet) aminoacylation. This Paraburkholderia xenovorans (strain LB400) protein is Methionine--tRNA ligase.